Reading from the N-terminus, the 297-residue chain is tRNA pseudouridine synthase A (297 aa).

Residue Asp72 is the Nucleophile of the active site. Position 144 (Tyr144) interacts with substrate.

It belongs to the tRNA pseudouridine synthase TruA family. Homodimer.

It carries out the reaction uridine(38/39/40) in tRNA = pseudouridine(38/39/40) in tRNA. Formation of pseudouridine at positions 38, 39 and 40 in the anticodon stem and loop of transfer RNAs. The sequence is that of tRNA pseudouridine synthase A from Mycobacterium bovis (strain ATCC BAA-935 / AF2122/97).